We begin with the raw amino-acid sequence, 227 residues long: LysM and putative peptidoglycan-binding domain-containing protein 1 (227 aa).

Over residues M1 to G11 the composition is skewed to pro residues. The interval M1 to R20 is disordered. Phosphoserine occurs at positions 23 and 33. Positions L40–I84 constitute a LysM domain. The segment at N95 to H150 is disordered. The span at D98–E107 shows a compositional bias: acidic residues. S99 carries the post-translational modification Phosphoserine. Residues E108–E127 are compositionally biased toward basic and acidic residues. Residues S166, S181, S194, and S212 each carry the phosphoserine modification. Positions A172–R196 are disordered.

The sequence is that of LysM and putative peptidoglycan-binding domain-containing protein 1 (LYSMD1) from Macaca fascicularis (Crab-eating macaque).